Consider the following 246-residue polypeptide: Envelope glycoprotein gp95 (246 aa).

Residues 1–192 are Extracellular-facing; that stretch reads IPSRPVGGPC…EWAVHLLKGL (192 aa). Asn-31 is a glycosylation site (N-linked (GlcNAc...) asparagine; by host). An intrachain disulfide couples Cys-50 to Cys-86. Residues 58-78 are fusion peptide; the sequence is GPTARIFASILAPGVAAAQAL. Residues 75-125 are a coiled coil; that stretch reads AQALKEIERLACWSVKQANLTTSLLGDLLDDVTSIRHAVLQNRAAIDFLLL. Residue Asn-93 is glycosylated (N-linked (GlcNAc...) asparagine; by host). The tract at residues 114–130 is immunosuppression; sequence LQNRAAIDFLLLAHGHG. Cysteines 131 and 138 form a disulfide. Asn-141 is a glycosylation site (N-linked (GlcNAc...) asparagine; by host). Positions 143 to 173 form a coiled coil; the sequence is SDHSESIQKKFQLMKEHVNKIGVDSDPIGSW. A helical transmembrane segment spans residues 193 to 213; sequence LLGLVVILLLVVCLPCLLQIV. S-palmitoyl cysteine; by host attachment occurs at residues Cys-205 and Cys-208. The Cytoplasmic portion of the chain corresponds to 214-246; the sequence is CGNIRKMINNSISYHTEYKKLQKAYGQPESRIV.

It belongs to the Alpharetroviruses envelope glycoprotein family. As to quaternary structure, heterodimer with the transmembrane protein. The mature envelope protein (Env) consists of a trimer of SU-TM heterodimers attached by a labile interchain disulfide bond. In terms of assembly, heterodimer with the surface protein. The mature envelope protein (Env) consists of a trimer of SU-TM heterodimers attached by a labile interchain disulfide bond. Post-translationally, specific enzymatic cleavages in vivo yield mature proteins. Envelope glycoproteins are synthesized as an inactive precursor that is N-glycosylated and processed likely by host cell furin or by a furin-like protease in the Golgi to yield the mature SU and TM proteins. The cleavage site between SU and TM requires the minimal sequence [KR]-X-[KR]-R. The transmembrane protein is palmitoylated. Palmitoylation is necessary for glycoprotein function and infectivity.

The protein localises to the virion membrane. It is found in the host cell membrane. Functionally, the surface protein (SU) attaches the virus to the host cell by binding to its receptor. This interaction triggers the refolding of the transmembrane protein (TM) thereby unmasking its fusion peptide and the formation of a reactive thiolate to activate its fusogenic potential. Fusion occurs at the host cell plasma membrane. Its function is as follows. The transmembrane protein (TM) acts as a class I viral fusion protein. Under the current model, the protein has at least 3 conformational states: pre-fusion native state, pre-hairpin intermediate state, and post-fusion hairpin state. During viral and target cell membrane fusion, the coiled coil regions (heptad repeats) assume a trimer-of-hairpins structure, positioning the fusion peptide in close proximity to the C-terminal region of the ectodomain. The formation of this structure appears to drive apposition and subsequent fusion of viral and target cell membranes. Membranes fusion leads to delivery of the nucleocapsid into the cytoplasm. The chain is Envelope glycoprotein gp95 (env) from Galliformes.